Here is a 190-residue protein sequence, read N- to C-terminus: Prostaglandin-H2 D-isomerase (190 aa).

Positions 1–22 are cleaved as a signal peptide; the sequence is MATHHTLWMGLALLGVLGDLQA. S29 is a glycosylation site (O-linked (GalNAc...) serine). N-linked (GlcNAc...) (complex) asparagine glycosylation is present at N51. The active-site Nucleophile is C65. Residue N78 is glycosylated (N-linked (GlcNAc...) (complex) asparagine). An intrachain disulfide couples C89 to C186.

It belongs to the calycin superfamily. Lipocalin family. Monomer. Post-translationally, N- and O-glycosylated. Both N-glycosylation recognition sites are almost quantitatively occupied by N-glycans of the biantennary complex type, with a considerable proportion of structures bearing a bisecting GlcNAc. N-glycan at Asn-78: dHex1Hex5HexNAc4. Agalacto structure as well as sialylated and nonsialylated oligosaccharides bearing alpha2-3- and/or alpha2-6-linked NeuNAc are present. In terms of tissue distribution, abundant in the brain and CNS, where it is expressed in tissues of the blood-brain barrier and secreted into the cerebro-spinal fluid. Abundantly expressed in the heart. In the male reproductive system, it is expressed in the testis, epididymis and prostate, and is secreted into the seminal fluid. Expressed in the eye and secreted into the aqueous humor. Lower levels detected in various tissue fluids such as serum, normal urine, ascitic fluid and tear fluid. Also found in a number of other organs including ovary, fimbriae of the fallopian tubes, kidney, leukocytes.

The protein resides in the rough endoplasmic reticulum. It is found in the nucleus membrane. Its subcellular location is the golgi apparatus. The protein localises to the cytoplasm. It localises to the perinuclear region. The protein resides in the secreted. The catalysed reaction is prostaglandin H2 = prostaglandin D2. Functionally, catalyzes the conversion of PGH2 to PGD2, a prostaglandin involved in smooth muscle contraction/relaxation and a potent inhibitor of platelet aggregation. Involved in a variety of CNS functions, such as sedation, NREM sleep and PGE2-induced allodynia, and may have an anti-apoptotic role in oligodendrocytes. Binds small non-substrate lipophilic molecules, including biliverdin, bilirubin, retinal, retinoic acid and thyroid hormone, and may act as a scavenger for harmful hydrophobic molecules and as a secretory retinoid and thyroid hormone transporter. Possibly involved in development and maintenance of the blood-brain, blood-retina, blood-aqueous humor and blood-testis barrier. It is likely to play important roles in both maturation and maintenance of the central nervous system and male reproductive system. Involved in PLA2G3-dependent maturation of mast cells. PLA2G3 is secreted by immature mast cells and acts on nearby fibroblasts upstream to PTDGS to synthesize PGD2, which in turn promotes mast cell maturation and degranulation via PTGDR. This chain is Prostaglandin-H2 D-isomerase (PTGDS), found in Homo sapiens (Human).